We begin with the raw amino-acid sequence, 177 residues long: Nucleoside triphosphate/diphosphate phosphatase (177 aa).

The active-site Proton donor is the Arg-23. Mg(2+) contacts are provided by Asn-87, Asp-103, Asp-105, Asp-107, Asp-120, and Glu-123.

This sequence belongs to the Ntdp family. Requires Mg(2+) as cofactor.

The enzyme catalyses a ribonucleoside 5'-triphosphate + H2O = a ribonucleoside 5'-diphosphate + phosphate + H(+). The catalysed reaction is a ribonucleoside 5'-diphosphate + H2O = a ribonucleoside 5'-phosphate + phosphate + H(+). In terms of biological role, has nucleoside phosphatase activity towards nucleoside triphosphates and nucleoside diphosphates. This is Nucleoside triphosphate/diphosphate phosphatase from Streptococcus pneumoniae (strain ATCC 700669 / Spain 23F-1).